The following is a 215-amino-acid chain: MQSLITYIALVFSLFVSSAIGLHLEVPALPNPQPVCIRDFVQENQMVVVNIKTDGSKGDGQRLDLKVTDSLGNEYRNKKDVVGHANVAFTSQHNAAIDICLTNYLDNKWSKHQQTVRSVELDIESGAAARDWNALQASEKLKPVEVELKRIESITEEIVEELRYLKAREERMRDTNESTNSRVKWFSIVVIASLVGFGVWQIQYLRHYFKVKHII.

A signal peptide spans 1 to 21 (MQSLITYIALVFSLFVSSAIG). Residues 22 to 184 (LHLEVPALPN…TNESTNSRVK (163 aa)) lie on the Lumenal side of the membrane. Residues 34–125 (PVCIRDFVQE…VRSVELDIES (92 aa)) enclose the GOLD domain. Residues 185–205 (WFSIVVIASLVGFGVWQIQYL) traverse the membrane as a helical segment. Over 206–215 (RHYFKVKHII) the chain is Cytoplasmic.

The protein belongs to the EMP24/GP25L family.

The protein resides in the endoplasmic reticulum membrane. It localises to the golgi apparatus membrane. In terms of biological role, constituent of COPII-coated endoplasmic reticulum-derived transport vesicles. Required for efficient transport of a subset of secretory proteins to the Golgi. Facilitates retrograde transport from the Golgi to the endoplasmic reticulum. The protein is Endoplasmic reticulum vesicle protein 25 (ERV25) of Candida albicans (strain SC5314 / ATCC MYA-2876) (Yeast).